The following is a 333-amino-acid chain: Coiled-coil domain-containing protein 68 (333 aa).

Coiled coils occupy residues 86–120 and 160–302; these read LDLLMENMRRKDQQLLEMNRENEVLQIKLEASREA and EKEQ…HWTE.

In terms of assembly, interacts with CEP170.

It is found in the cytoplasm. The protein resides in the cytoskeleton. Its subcellular location is the microtubule organizing center. It localises to the centrosome. The protein localises to the centriole. In terms of biological role, centriolar protein required for centriole subdistal appendage assembly and microtubule anchoring in interphase cells. Together with CCDC120, cooperate with subdistal appendage components ODF2, NIN and CEP170 for hierarchical subdistal appendage assembly. The sequence is that of Coiled-coil domain-containing protein 68 (Ccdc68) from Mus musculus (Mouse).